We begin with the raw amino-acid sequence, 139 residues long: Large ribosomal subunit protein uL16 (139 aa).

A disordered region spans residues 1–23; that stretch reads MLQPARTKYRKMHKGRMPGSAHR. Over residues 7-16 the composition is skewed to basic residues; sequence TKYRKMHKGR.

This sequence belongs to the universal ribosomal protein uL16 family. As to quaternary structure, part of the 50S ribosomal subunit.

Binds 23S rRNA and is also seen to make contacts with the A and possibly P site tRNAs. In Myxococcus xanthus (strain DK1622), this protein is Large ribosomal subunit protein uL16.